Consider the following 314-residue polypeptide: Homoserine O-succinyltransferase (314 aa).

The Acyl-thioester intermediate role is filled by Cys-142. 2 residues coordinate substrate: Lys-163 and Ser-192. Catalysis depends on His-235, which acts as the Proton acceptor. Residue Glu-237 is part of the active site. Residue Arg-249 participates in substrate binding.

The protein belongs to the MetA family.

The protein localises to the cytoplasm. It catalyses the reaction L-homoserine + succinyl-CoA = O-succinyl-L-homoserine + CoA. It participates in amino-acid biosynthesis; L-methionine biosynthesis via de novo pathway; O-succinyl-L-homoserine from L-homoserine: step 1/1. Transfers a succinyl group from succinyl-CoA to L-homoserine, forming succinyl-L-homoserine. The chain is Homoserine O-succinyltransferase from Shewanella frigidimarina (strain NCIMB 400).